The primary structure comprises 302 residues: Pathogenicity locus probable regulatory protein HrpS (302 aa).

A Sigma-54 factor interaction domain is found at 9-237; the sequence is DDLDEERVPN…LKAAAKRHVL (229 aa). ATP is bound by residues 37–44 and 99–108; these read GETGTGKD and AQGGTLYLDE. Positions 279-298 form a DNA-binding region, H-T-H motif; it reads IDAASLELDMPRRTLYRRIK.

Functionally, member of the two-component regulatory system HrpR/HrpS that regulates the activation of the sigma factor hrpL which itself induces the expression of hprD as well as other hrp loci which are involved in plant pathogenicity, hrmA and avr genes. Probably interacts with sigma-54. In Pseudomonas savastanoi pv. phaseolicola (Pseudomonas syringae pv. phaseolicola), this protein is Pathogenicity locus probable regulatory protein HrpS (hrpS).